Consider the following 203-residue polypeptide: Putative zinc finger protein 876 (203 aa).

4 C2H2-type zinc fingers span residues 63–85 (YTCEECGKAFYRSSHLTEHKNIH), 91–113 (YKCEECGNAFYRSSHLTKHKRIH), 119–141 (YKCEECGKAFRQSSALNEHKKIH), and 147–169 (YKCKECGKAFRWSRSLNEHTNIH). The segment at 175 to 197 (YTCEECGKDFTWSSTLTVHQRIQ) adopts a C2H2-type 5; degenerate zinc-finger fold.

Belongs to the krueppel C2H2-type zinc-finger protein family.

Its subcellular location is the nucleus. Its function is as follows. May be involved in transcriptional regulation. This chain is Putative zinc finger protein 876 (ZNF876P), found in Homo sapiens (Human).